A 271-amino-acid polypeptide reads, in one-letter code: Metal-staphylopine import system ATP-binding protein CntD (271 aa).

The ABC transporter domain maps to 6 to 251; sequence VKHLTITDTW…PEHVYTKYLL (246 aa). 38–45 contributes to the ATP binding site; sequence GESGSGKS.

It belongs to the ABC transporter superfamily. In terms of assembly, the complex is composed of two ATP-binding proteins (CntD and CntF), two transmembrane proteins (CntB and CntC) and a solute-binding protein (CntA).

The protein localises to the cell membrane. Nickel/cobalt import is reduced in the presence of zinc. Its function is as follows. Part of the ABC transporter complex CntABCDF (Opp1) involved in the uptake of metal in complex with the metallophore staphylopine (StP). Involved in the import of divalent metals ions such as nickel, cobalt and zinc. Probably responsible for energy coupling to the transport system. Plays a major role in nickel/cobalt import in zinc-depleted conditions. Contributes to virulence. Required for full urease activity in vitro. In Staphylococcus aureus (strain NCTC 8325 / PS 47), this protein is Metal-staphylopine import system ATP-binding protein CntD.